Consider the following 244-residue polypeptide: Large ribosomal subunit protein uL30A (244 aa).

Residues 1 to 26 form a disordered region; that stretch reads MAAEKILTPESQLKKSKAQQKTAEQV.

This sequence belongs to the universal ribosomal protein uL30 family. In terms of assembly, component of the large ribosomal subunit (LSU). Mature yeast ribosomes consist of a small (40S) and a large (60S) subunit. The 40S small subunit contains 1 molecule of ribosomal RNA (18S rRNA) and 33 different proteins (encoded by 57 genes). The large 60S subunit contains 3 rRNA molecules (25S, 5.8S and 5S rRNA) and 46 different proteins (encoded by 81 genes).

Its subcellular location is the cytoplasm. Its function is as follows. Component of the ribosome, a large ribonucleoprotein complex responsible for the synthesis of proteins in the cell. The small ribosomal subunit (SSU) binds messenger RNAs (mRNAs) and translates the encoded message by selecting cognate aminoacyl-transfer RNA (tRNA) molecules. The large subunit (LSU) contains the ribosomal catalytic site termed the peptidyl transferase center (PTC), which catalyzes the formation of peptide bonds, thereby polymerizing the amino acids delivered by tRNAs into a polypeptide chain. The nascent polypeptides leave the ribosome through a tunnel in the LSU and interact with protein factors that function in enzymatic processing, targeting, and the membrane insertion of nascent chains at the exit of the ribosomal tunnel. The polypeptide is Large ribosomal subunit protein uL30A (Saccharomyces cerevisiae (strain ATCC 204508 / S288c) (Baker's yeast)).